We begin with the raw amino-acid sequence, 571 residues long: Carboxylesterase 3B (571 aa).

An N-terminal signal peptide occupies residues 1 to 31 (MTNMRTMIPAGSSVLVWVTCLLLAFVTTVTG). Cysteine 100 and cysteine 127 are disulfide-bonded. Catalysis depends on serine 232, which acts as the Acyl-ester intermediate. Cysteines 284 and 295 form a disulfide. Residue asparagine 311 is glycosylated (N-linked (GlcNAc...) asparagine). Active-site charge relay system residues include glutamate 347 and histidine 460. Residues 568–571 (PEEL) carry the Prevents secretion from ER motif.

Belongs to the type-B carboxylesterase/lipase family.

Its subcellular location is the endoplasmic reticulum lumen. The catalysed reaction is a carboxylic ester + H2O = an alcohol + a carboxylate + H(+). In terms of biological role, involved in the detoxification of xenobiotics and in the activation of ester and amide prodrugs. The chain is Carboxylesterase 3B (Ces3b) from Mus musculus (Mouse).